A 61-amino-acid chain; its full sequence is Metallothionein-1F (61 aa).

Residue methionine 1 is modified to N-acetylmethionine. Positions 1-29 (MDPNCSCAAGVSCTCAGSCKCKECKCTSC) are beta. The a divalent metal cation site is built by cysteine 5, cysteine 7, cysteine 13, cysteine 15, cysteine 19, cysteine 21, cysteine 24, cysteine 26, cysteine 29, cysteine 33, cysteine 34, cysteine 36, cysteine 37, cysteine 41, cysteine 44, cysteine 48, cysteine 50, and cysteine 57. The tract at residues 30-61 (KKSCCSCCPVGCSKCAQGCVCKGASEKCSCCD) is alpha. Serine 58 is modified (phosphoserine). A divalent metal cation-binding residues include cysteine 59 and cysteine 60.

This sequence belongs to the metallothionein superfamily. Type 1 family. As to quaternary structure, monomer.

Metallothioneins have a high content of cysteine residues that bind various heavy metals; these proteins are transcriptionally regulated by both heavy metals and glucocorticoids. This Homo sapiens (Human) protein is Metallothionein-1F (MT1F).